The sequence spans 506 residues: Cytochrome P450 monooxygenase tpcB (506 aa).

Cysteine 450 contacts heme.

It belongs to the cytochrome P450 family. Requires heme as cofactor.

The protein operates within secondary metabolite biosynthesis; terpenoid biosynthesis. Cytochrome P450 monooxygenase; part of the gene cluster that mediates the biosynthesis of terpestacin. The bifunctional terpene synthase tpcA converts isopentenyl diphosphate (IPP) and dimethylallyl diphosphate (DMAPP) into the sesterterpene preterpestacin I. The C-terminal prenyltransferase (PT) domain of tpcA catalyzes formation of GFPP, whereas the N-terminal terpene cyclase (TC) domain catalyzes the cyclization of GFPP into preterpestacin I. The cytochrome P450 monooxygenase tpcB then hydroxylates preterpestacin I to yield 24-hydroxypreterpstacin I (renamed as preterpestacin II) whereas the cytochrome P450 monooxygenase tpcC further hydroxylates preterpestacin II to yield 16,17-dihydroxypreterpestacin II (renamed as preterpestacin III). Finally, the FAD-dependent monooxygenase tpcD converts preterpestacin III into terpestacin. This chain is Cytochrome P450 monooxygenase tpcB, found in Cochliobolus heterostrophus (strain C5 / ATCC 48332 / race O) (Southern corn leaf blight fungus).